The primary structure comprises 447 residues: T-box transcription factor TBX20 (447 aa).

A disordered region spans residues 62 to 81 (DAHGEFGGGSGSSPSSSSLC). The T-box DNA-binding region spans 109 to 288 (LWDKFHELGT…SNPFAKGFRD (180 aa)). Residues 316-340 (TYGGEEDVLGDESQTTPNRGSAFTT) form a disordered region. The segment covering 327 to 340 (ESQTTPNRGSAFTT) has biased composition (polar residues).

It is found in the nucleus. Acts as a transcriptional activator and repressor required for cardiac development and may have key roles in the maintenance of functional and structural phenotypes in adult heart. This is T-box transcription factor TBX20 (TBX20) from Homo sapiens (Human).